Consider the following 170-residue polypeptide: ATP synthase subunit b (170 aa).

A helical transmembrane segment spans residues 22-41; that stretch reads VLNWAVVVFGLYKFLPGFLG.

It belongs to the ATPase B chain family. F-type ATPases have 2 components, F(1) - the catalytic core - and F(0) - the membrane proton channel. F(1) has five subunits: alpha(3), beta(3), gamma(1), delta(1), epsilon(1). F(0) has four main subunits: a(1), b(1), b'(1) and c(10-14). The alpha and beta chains form an alternating ring which encloses part of the gamma chain. F(1) is attached to F(0) by a central stalk formed by the gamma and epsilon chains, while a peripheral stalk is formed by the delta, b and b' chains.

The protein resides in the cellular thylakoid membrane. F(1)F(0) ATP synthase produces ATP from ADP in the presence of a proton or sodium gradient. F-type ATPases consist of two structural domains, F(1) containing the extramembraneous catalytic core and F(0) containing the membrane proton channel, linked together by a central stalk and a peripheral stalk. During catalysis, ATP synthesis in the catalytic domain of F(1) is coupled via a rotary mechanism of the central stalk subunits to proton translocation. Functionally, component of the F(0) channel, it forms part of the peripheral stalk, linking F(1) to F(0). This is ATP synthase subunit b from Prochlorococcus marinus subsp. pastoris (strain CCMP1986 / NIES-2087 / MED4).